The chain runs to 183 residues: Protein FAM180B (183 aa).

The N-terminal stretch at 1-23 (MAATLQFLVCLVVAICLLSGVTT) is a signal peptide.

It belongs to the FAM180 family.

Its subcellular location is the secreted. The chain is Protein FAM180B (FAM180B) from Homo sapiens (Human).